The chain runs to 31 residues: Superoxide dismutase [Cu-Zn] (31 aa).

Belongs to the Cu-Zn superoxide dismutase family. Cu cation serves as cofactor. It depends on Zn(2+) as a cofactor.

It localises to the cytoplasm. The catalysed reaction is 2 superoxide + 2 H(+) = H2O2 + O2. Destroys radicals which are normally produced within the cells and which are toxic to biological systems. The protein is Superoxide dismutase [Cu-Zn] of Striga hermonthica (Purple witchweed).